A 242-amino-acid chain; its full sequence is MSKRRIAPLTFLRRLLLRILAALAVFWGGGIALFSVVPVPFSAVMAERQISAWLGGEFGYVAHSDWVSMADISPWMGLAVIAAEDQKFPEHWGFDVPAIEKALAHNERNESRIRGASTLSQQTAKNLFLWDGRSWLRKGLEAGLTLGIETVWSKKRILTVYLNIAEFGDGIFGVEAAAQRYFHKPASRLNMSEAALLAAVLPNPLRYKANAPSGYVRSRQAWIMRQMRQLGGESFMTRNQLN.

A helical transmembrane segment spans residues 19-39 (ILAALAVFWGGGIALFSVVPV).

The protein belongs to the glycosyltransferase 51 family.

Its subcellular location is the cell inner membrane. It catalyses the reaction [GlcNAc-(1-&gt;4)-Mur2Ac(oyl-L-Ala-gamma-D-Glu-L-Lys-D-Ala-D-Ala)](n)-di-trans,octa-cis-undecaprenyl diphosphate + beta-D-GlcNAc-(1-&gt;4)-Mur2Ac(oyl-L-Ala-gamma-D-Glu-L-Lys-D-Ala-D-Ala)-di-trans,octa-cis-undecaprenyl diphosphate = [GlcNAc-(1-&gt;4)-Mur2Ac(oyl-L-Ala-gamma-D-Glu-L-Lys-D-Ala-D-Ala)](n+1)-di-trans,octa-cis-undecaprenyl diphosphate + di-trans,octa-cis-undecaprenyl diphosphate + H(+). Its pathway is cell wall biogenesis; peptidoglycan biosynthesis. Peptidoglycan polymerase that catalyzes glycan chain elongation from lipid-linked precursors. The chain is Biosynthetic peptidoglycan transglycosylase from Salmonella agona (strain SL483).